Reading from the N-terminus, the 252-residue chain is MERLLIVNADDFGLSKGQNYGIIEACRNGIVTSTTALVNGQAIDHAVQLSRDEPSLAIGMHFVLTMGKPLTVMPGLTRDGVLGKWIWQLAEEDALPLEEITQELASQYLRFIELFGRKPTHLDSHHHVHMFPQIFPIVAKFAAEEGIALRIDRQPLSNDGDLPANLRSSQGFSSAFYGEEISEALFLQVLDDSSHRGERSLEVMCHPAFVDNTIRQSAYCFPRLTELDVLTSASLKYAIAERGYRLGSYHDV.

Residues His61 and His125 each coordinate Mg(2+).

The protein belongs to the YdjC deacetylase family. ChbG subfamily. Homodimer. Mg(2+) serves as cofactor.

Its subcellular location is the cytoplasm. It carries out the reaction N,N'-diacetylchitobiose + H2O = N-acetyl-beta-D-glucosaminyl-(1-&gt;4)-D-glucosamine + acetate. The enzyme catalyses diacetylchitobiose-6'-phosphate + H2O = N'-monoacetylchitobiose-6'-phosphate + acetate. It functions in the pathway glycan degradation; chitin degradation. In terms of biological role, involved in the degradation of chitin. ChbG is essential for growth on the acetylated chitooligosaccharides chitobiose and chitotriose but is dispensable for growth on cellobiose and chitosan dimer, the deacetylated form of chitobiose. Deacetylation of chitobiose-6-P and chitotriose-6-P is necessary for both the activation of the chb promoter by the regulatory protein ChbR and the hydrolysis of phosphorylated beta-glucosides by the phospho-beta-glucosidase ChbF. Catalyzes the removal of only one acetyl group from chitobiose-6-P to yield monoacetylchitobiose-6-P, the inducer of ChbR and the substrate of ChbF. The chain is Chitooligosaccharide deacetylase from Escherichia coli O6:K15:H31 (strain 536 / UPEC).